Consider the following 341-residue polypeptide: tRNA-specific 2-thiouridylase MnmA (341 aa).

ATP is bound by residues 8-15 (GMSGGVDS) and Met34. Cys94 functions as the Nucleophile in the catalytic mechanism. Cys94 and Cys188 are oxidised to a cystine. Gly118 serves as a coordination point for ATP. The interaction with tRNA stretch occupies residues 136-138 (KDQ). Residue Cys188 is the Cysteine persulfide intermediate of the active site. An interaction with tRNA region spans residues 290–291 (RY).

Belongs to the MnmA/TRMU family.

It localises to the cytoplasm. The enzyme catalyses S-sulfanyl-L-cysteinyl-[protein] + uridine(34) in tRNA + AH2 + ATP = 2-thiouridine(34) in tRNA + L-cysteinyl-[protein] + A + AMP + diphosphate + H(+). In terms of biological role, catalyzes the 2-thiolation of uridine at the wobble position (U34) of tRNA, leading to the formation of s(2)U34. The protein is tRNA-specific 2-thiouridylase MnmA of Sulfurimonas denitrificans (strain ATCC 33889 / DSM 1251) (Thiomicrospira denitrificans (strain ATCC 33889 / DSM 1251)).